We begin with the raw amino-acid sequence, 666 residues long: Frizzled-3 (666 aa).

Residues 1-22 (MAMTWIVFSLWPLTVFMGHIGG) form the signal peptide. In terms of domain architecture, FZ spans 23 to 136 (HSLFSCEPIT…CSRFPDCDEP (114 aa)). The Extracellular portion of the chain corresponds to 23-205 (HSLFSCEPIT…REELSFARYF (183 aa)). 5 disulfides stabilise this stretch: Cys-28–Cys-89, Cys-36–Cys-82, Cys-73–Cys-110, Cys-99–Cys-133, and Cys-103–Cys-127. N-linked (GlcNAc...) asparagine glycosylation is present at Asn-42. A helical membrane pass occupies residues 206-226 (IGLISIICLSATLFTFLTFLI). The Cytoplasmic segment spans residues 227 to 237 (DVTRFRYPERP). Residues 238 to 258 (IIFYAVCYMMVSLIFFIGFLL) traverse the membrane as a helical segment. The Extracellular segment spans residues 259 to 288 (EDRVACNASIPAQYKASTVTQGSHNKACTM). Asn-265 carries an N-linked (GlcNAc...) asparagine glycan. Residues 289–309 (LFMILYFFTMAGSVWWVILTI) traverse the membrane as a helical segment. The Cytoplasmic portion of the chain corresponds to 310–328 (TWFLAAVPKWGSEAIEKKA). The chain crosses the membrane as a helical span at residues 329 to 349 (LLFHASAWGIPGTLTIILLAM). Topologically, residues 350–374 (NKIEGDNISGVCFVGLYDVDALRYF) are extracellular. Residue Asn-356 is glycosylated (N-linked (GlcNAc...) asparagine). The helical transmembrane segment at 375 to 395 (VLAPLCLYVVVGVSLLLAGII) threads the bilayer. The Cytoplasmic segment spans residues 396-420 (SLNRVRIEIPLEKENQDKLVKFMIR). The chain crosses the membrane as a helical span at residues 421-441 (IGVFSILYLVPLLVVIGCYFY). Over 442-477 (EQAYRGIWETTWIQERCREYHIPCPYQVTQMSRPDL) the chain is Extracellular. The chain crosses the membrane as a helical span at residues 478-498 (ILFLMKYLMALIVGIPSVFWV). Residues 499-666 (GSKKTCFEWA…RVIEEDGTSA (168 aa)) lie on the Cytoplasmic side of the membrane. The Lys-Thr-X-X-X-Trp motif, mediates interaction with the PDZ domain of Dvl family members signature appears at 502–507 (KTCFEW). Residues 538–666 (RDPNTPIIRK…RVIEEDGTSA (129 aa)) are disordered. Residues 550–565 (GTSTQGTSTHASSTQL) are compositionally biased toward polar residues. The span at 617 to 638 (LTDHSRHSSSHRLNEQSRHSSI) shows a compositional bias: basic and acidic residues. Positions 639–656 (RDLSNNPMTHITHGTSMN) are enriched in polar residues.

The protein belongs to the G-protein coupled receptor Fz/Smo family. In terms of assembly, interacts with VANGL2. Post-translationally, ubiquitinated by ZNRF3, leading to its degradation by the proteasome. As to expression, widely expressed. Relatively high expression in the CNS, including regions of the limbic system, in kidney, pancreas, skeletal muscle, uterus and testis.

It is found in the membrane. The protein localises to the cell membrane. It localises to the cell surface. The protein resides in the apical cell membrane. Its function is as follows. Receptor for Wnt proteins. Most of frizzled receptors are coupled to the beta-catenin canonical signaling pathway, which leads to the activation of disheveled proteins, inhibition of GSK-3 kinase, nuclear accumulation of beta-catenin and activation of Wnt target genes. A second signaling pathway involving PKC and calcium fluxes has been seen for some family members, but it is not yet clear if it represents a distinct pathway or if it can be integrated in the canonical pathway, as PKC seems to be required for Wnt-mediated inactivation of GSK-3 kinase. Both pathways seem to involve interactions with G-proteins. Activation by Wnt5A stimulates PKC activity via a G-protein-dependent mechanism. Involved in transduction and intercellular transmission of polarity information during tissue morphogenesis and/or in differentiated tissues. Plays a role in controlling early axon growth and guidance processes necessary for the formation of a subset of central and peripheral major fiber tracts. Required for the development of major fiber tracts in the central nervous system, including: the anterior commissure, the corpus callosum, the thalamocortical, corticothalamic and nigrostriatal tracts, the corticospinal tract, the fasciculus retroflexus, the mammillothalamic tract, the medial lemniscus, and ascending fiber tracts from the spinal cord to the brain. In the peripheral nervous system, controls axon growth in distinct populations of cranial and spinal motor neurons, including the facial branchimotor nerve, the hypoglossal nerve, the phrenic nerve, and motor nerves innervating dorsal limbs. Involved in the migration of cranial neural crest cells. May also be implicated in the transmission of sensory information from the trunk and limbs to the brain. Controls commissural sensory axons guidance after midline crossing along the anterior-posterior axis in the developing spinal cord in a Wnt-dependent signaling pathway. Together with FZD6, is involved in the neural tube closure and plays a role in the regulation of the establishment of planar cell polarity (PCP), particularly in the orientation of asymmetric bundles of stereocilia on the apical faces of a subset of auditory and vestibular sensory cells located in the inner ear. Promotes neurogenesis by maintaining sympathetic neuroblasts within the cell cycle in a beta-catenin-dependent manner. The chain is Frizzled-3 (FZD3) from Homo sapiens (Human).